Here is a 101-residue protein sequence, read N- to C-terminus: U-scoloptoxin(10)-Sm2a (101 aa).

The signal sequence occupies residues 1 to 23 (MNKSMIILCAVLFLTYIIEENEA).

The protein belongs to the scoloptoxin-10 family. Post-translationally, contains 3 disulfide bonds. In terms of tissue distribution, expressed by the venom gland.

Its subcellular location is the secreted. In Scolopendra morsitans (Tanzanian blue ringleg centipede), this protein is U-scoloptoxin(10)-Sm2a.